Reading from the N-terminus, the 406-residue chain is Argininosuccinate synthase (406 aa).

Residue 9-17 (AYSGGLDTS) participates in ATP binding. L-citrulline is bound at residue Y86. G116 serves as a coordination point for ATP. L-aspartate is bound by residues T118, N122, and D123. N122 is a binding site for L-citrulline. L-citrulline is bound by residues R126, S174, S183, E259, and Y271.

This sequence belongs to the argininosuccinate synthase family. Type 1 subfamily. As to quaternary structure, homotetramer.

It is found in the cytoplasm. The catalysed reaction is L-citrulline + L-aspartate + ATP = 2-(N(omega)-L-arginino)succinate + AMP + diphosphate + H(+). The protein operates within amino-acid biosynthesis; L-arginine biosynthesis; L-arginine from L-ornithine and carbamoyl phosphate: step 2/3. The sequence is that of Argininosuccinate synthase from Geobacillus kaustophilus (strain HTA426).